Here is a 404-residue protein sequence, read N- to C-terminus: Phosphopentomutase (404 aa).

Mn(2+)-binding residues include D10, D303, H308, D344, H345, and H356.

It belongs to the phosphopentomutase family. Requires Mn(2+) as cofactor.

It localises to the cytoplasm. The catalysed reaction is 2-deoxy-alpha-D-ribose 1-phosphate = 2-deoxy-D-ribose 5-phosphate. It catalyses the reaction alpha-D-ribose 1-phosphate = D-ribose 5-phosphate. It functions in the pathway carbohydrate degradation; 2-deoxy-D-ribose 1-phosphate degradation; D-glyceraldehyde 3-phosphate and acetaldehyde from 2-deoxy-alpha-D-ribose 1-phosphate: step 1/2. Functionally, isomerase that catalyzes the conversion of deoxy-ribose 1-phosphate (dRib-1-P) and ribose 1-phosphate (Rib-1-P) to deoxy-ribose 5-phosphate (dRib-5-P) and ribose 5-phosphate (Rib-5-P), respectively. This is Phosphopentomutase from Shewanella putrefaciens (strain CN-32 / ATCC BAA-453).